A 229-amino-acid polypeptide reads, in one-letter code: MKKITIAIDGYSSCGKSTMAKDLAREIGYIYIDSGAMYRAVTLYSLQKGFFTERGIDTEALKTAMPDIHISFRLNPETQRPMTFLNDTNVEDAIRSMEVSSHVSPIAALGFVREALVKQQQEMGKAKGIVMDGRDIGTVVFPDAELKIFVTASAAIRAQRRYDELRSKGQEASYEKILENVEERDRIDQTREVSPLRQADDAILLDNSHMSIAEQKKWLTEKFQAAING.

10 to 18 (GYSSCGKST) provides a ligand contact to ATP.

Belongs to the cytidylate kinase family. Type 1 subfamily.

It localises to the cytoplasm. It catalyses the reaction CMP + ATP = CDP + ADP. The catalysed reaction is dCMP + ATP = dCDP + ADP. This is Cytidylate kinase from Phocaeicola vulgatus (strain ATCC 8482 / DSM 1447 / JCM 5826 / CCUG 4940 / NBRC 14291 / NCTC 11154) (Bacteroides vulgatus).